Consider the following 377-residue polypeptide: Nucleosome assembly protein 1;2 (377 aa).

The stretch at 26-80 forms a coiled coil; that stretch reads VNVLKNKLHDLTGKHSNVTESLSPNVRKRVEALREIQTEHDELEAKFFEERAALE. A Nuclear export signal motif is present at residues 47–62; sequence LSPNVRKRVEALREIQ. The Nuclear localization signal signature appears at 223–228; sequence KKKPKK. The tract at residues 298–377 is disordered; the sequence is EAAEDDYAEL…GERPPECKQQ (80 aa). The segment covering 299–342 has biased composition (acidic residues); it reads AAEDDYAELEDDEDEDDDEEDDEDEDEEEEDEEDDEDEEEDEDE. Cys374 bears the Cysteine methyl ester mark. Cys374 carries S-farnesyl cysteine lipidation. A propeptide spans 375–377 (removed in mature form); it reads KQQ.

It belongs to the nucleosome assembly protein (NAP) family. Binds preferentially histone H1 in vitro. Interacts with CYCB1;1.

It is found in the nucleus. The protein resides in the cytoplasm. May modulate chromatin structure by regulation of nucleosome assembly/disassembly. Could function together with B-type cyclins in the regulation of microtubule dynamics. The chain is Nucleosome assembly protein 1;2 (NAP1;2) from Nicotiana tabacum (Common tobacco).